A 1239-amino-acid polypeptide reads, in one-letter code: MTDASKYQKLTPIDHVLLRPEMYVGSIETQSIPMFVFDPAKGKMVWESMQVNQGLLKIVDEILLNAADNINNSVRGARMTYISIKISDSGEIMVENDGAGLPIVKSKEHKMYIPEMVFGHLLTSSNYNNDASSTTAGRHGYGAKLTNILSTKFSVVCRTAGREFHMSWTDHMRMATTPRVSNVDPKEKNVTRVTFMPDYAHFGFPTAAISLDMKRVLHKRIMDLAAMFSKIEVRLNNVPFGFQTFNDYARLYSLPGADGAMPPEPFVHTGPNGSIAFVPQLTQSPKRIVGVVNGVVTYNGGTHCTSAMEILETGLDSLSRSLKKDGKVIDTNRVARHFTVLVFLIQSQPKFDSQSKARLVSTVTMPRVPRTALDQYLAAMPFLEAHMNSMDDQLAAELNKEIGTGKRLSSRSLISSITKLVDATSSRSDGKNIRTLIVTEGDSAKALALNSLSSEQKKFCGVFPLRGKLLNVRNKNLKRLKTCKELQDLFLALGLELGKTYKSPAELRYQRLLVMTDQDADGSHIKGLVINAFESLWPSLLQHNPGYISLFSTPIVKIKVNGKAKEVVAFHSFRDFHRWQRANPNARYSAKYYKGLGTSTTAEGKEYFADMERNVMRLVVEPKDHRLLDSVFDSAEVEWRKEWMSKANAFQGEVDIDRSKKLLTIGDFVHKEMVHFALVGNARAIPHCVDGLKPSQRKILWAMLKRHSSEAAKVAQLSGYISEVSSFHHGEASLQETIVKMAQNFTGGNNINLLVPEGQFGSRQQLGNDHAAPRYIFTKLSRFARLLFPEDDDPLLDYIDEEGTMVEPNHYVPILPLLLCNGAVGIGFGFATNIPSFHPLDVSAAVRAMINGESAKQVVRNLVPWAVGFQGTVRRGPEKEYIAVGKYTAHRNGRLHVSELPWMTSIEAFRSHISSLASSDVVQRIADYSGANHIDIDLIVREGSMTTWAECETDLALSQRIYINGTVFSPDGTLSPIDADLSPVLQWHYDRRLDLYKRRRTRQIGLLEMDLARLQSTRKFVEHFRQGHIDFLAATDDTLTKTCVKLGLVRVDDGYDYILKKPITFYTKTSTEKLQADIKKTQDSIAVLKQTTPVKMWLTDLDKFDKTFQEYERVLIHSIQKEQRPASITGGEEVPALRQPPLMLEAPAKGAASSSYRVHICRYEEPPASKRKPEDTYGGALSSGGSTRNVGKRLTGARGAKKKKVVRRTRTKMSLGTRVAEFAGAQLGRLLPQLPRLLF.

ATP is bound by residues asparagine 65, asparagine 96, 124-126, 137-144, and 354-356; these read SSN, GRHGYGAK, and QSK. Residues 434–548 enclose the Toprim domain; sequence RTLIVTEGDS…SLLQHNPGYI (115 aa). The Mg(2+) site is built by glutamate 440, aspartate 517, and aspartate 519. In terms of domain architecture, Topo IIA-type catalytic spans 685–1101; the sequence is IPHCVDGLKP…TPVKMWLTDL (417 aa). The active-site O-(5'-phospho-DNA)-tyrosine intermediate is the tyrosine 775. The segment at 956–965 is interaction with DNA; sequence ALSQRIYING. The tract at residues 1167–1206 is disordered; the sequence is PASKRKPEDTYGGALSSGGSTRNVGKRLTGARGAKKKKVV.

It belongs to the type II topoisomerase family. Homodimer. It depends on Mg(2+) as a cofactor. Requires Mn(2+) as cofactor. Ca(2+) serves as cofactor.

It localises to the nucleus. The protein resides in the mitochondrion matrix. It is found in the kinetoplast. The enzyme catalyses ATP-dependent breakage, passage and rejoining of double-stranded DNA.. Its function is as follows. Control of topological states of DNA by transient breakage and subsequent rejoining of DNA strands. Topoisomerase II makes double-strand breaks. The polypeptide is DNA topoisomerase 2 (TOP2) (Crithidia fasciculata).